The primary structure comprises 406 residues: Argininosuccinate synthase (406 aa).

ATP is bound by residues 12–20 and A40; that span reads AYSGGLDTS. The L-citrulline site is built by Y92 and S97. G122 is an ATP binding site. Residues T124, N128, and D129 each coordinate L-aspartate. N128 is an L-citrulline binding site. Residues R132, S181, S190, E266, and Y278 each coordinate L-citrulline.

Belongs to the argininosuccinate synthase family. Type 1 subfamily. Homotetramer.

The protein localises to the cytoplasm. It catalyses the reaction L-citrulline + L-aspartate + ATP = 2-(N(omega)-L-arginino)succinate + AMP + diphosphate + H(+). The protein operates within amino-acid biosynthesis; L-arginine biosynthesis; L-arginine from L-ornithine and carbamoyl phosphate: step 2/3. This is Argininosuccinate synthase from Serratia proteamaculans (strain 568).